Consider the following 607-residue polypeptide: Serine/threonine-protein kinase sid2 (607 aa).

Residues Ser56, Ser60, Ser65, and Ser86 each carry the phosphoserine modification. Residues 93–108 (DRSGELSYKDNNHWSD) show a composition bias toward basic and acidic residues. Positions 93–118 (DRSGELSYKDNNHWSDRSSTGSPRWE) are disordered. Over residues 109 to 118 (RSSTGSPRWE) the composition is skewed to polar residues. Residues 208 to 508 (FQTITQVGQG…LKQVMQHPYF (301 aa)) enclose the Protein kinase domain. Residues 214–222 (VGQGGYGSV) and Lys237 contribute to the ATP site. Tyr219 carries the phosphotyrosine modification. Asp331 functions as the Proton acceptor in the catalytic mechanism. Residue Ser402 is modified to Phosphoserine. Residues 509–589 (SKIDWKNVRT…RHQKNSHPTS (81 aa)) enclose the AGC-kinase C-terminal domain. The disordered stretch occupies residues 586-607 (HPTSSSSALSSPLSAPSFGTLL). Residues 589–607 (SSSSALSSPLSAPSFGTLL) are compositionally biased toward low complexity.

It belongs to the protein kinase superfamily. Ser/Thr protein kinase family. In terms of assembly, interacts with mob1 and cdc11.

The protein resides in the cytoplasm. It is found in the cytoskeleton. Its subcellular location is the microtubule organizing center. It localises to the spindle pole body. The catalysed reaction is L-seryl-[protein] + ATP = O-phospho-L-seryl-[protein] + ADP + H(+). The enzyme catalyses L-threonyl-[protein] + ATP = O-phospho-L-threonyl-[protein] + ADP + H(+). Part of a signaling pathway. Required for initiation of medial ring constriction and septation. The sequence is that of Serine/threonine-protein kinase sid2 (sid2) from Schizosaccharomyces pombe (strain 972 / ATCC 24843) (Fission yeast).